We begin with the raw amino-acid sequence, 272 residues long: Sulfate transporter CysZ (272 aa).

The next 4 membrane-spanning stretches (helical) occupy residues 29–49 (FVIIPILLNTILLCGLFWLFI), 66–86 (WLSFLSVILLTLSILTILLLF), 148–168 (IIALFLLSFIPLVGQTIVPVL), and 219–239 (FVPVINLLIMPVAVCGATLMW).

The protein belongs to the CysZ family.

Its subcellular location is the cell inner membrane. Functionally, high affinity, high specificity proton-dependent sulfate transporter, which mediates sulfate uptake. Provides the sulfur source for the cysteine synthesis pathway. This is Sulfate transporter CysZ from Haemophilus influenzae (strain 86-028NP).